The chain runs to 85 residues: Conotoxin Vx15a (85 aa).

A signal peptide spans methionine 1–serine 23. The propeptide occupies aspartate 24–arginine 49. Residue glutamine 50 is modified to Pyrrolidone carboxylic acid.

This sequence belongs to the conotoxin O2 superfamily. Contains 4 disulfide bonds. As to expression, expressed by the venom duct.

It is found in the secreted. In Conus vexillum (Flag cone), this protein is Conotoxin Vx15a.